Consider the following 281-residue polypeptide: Ribosomal RNA small subunit methyltransferase J (281 aa).

S-adenosyl-L-methionine is bound by residues 129 to 130 (RD), 145 to 146 (ER), and aspartate 199.

The protein belongs to the methyltransferase superfamily. RsmJ family.

It is found in the cytoplasm. The catalysed reaction is guanosine(1516) in 16S rRNA + S-adenosyl-L-methionine = N(2)-methylguanosine(1516) in 16S rRNA + S-adenosyl-L-homocysteine + H(+). Functionally, specifically methylates the guanosine in position 1516 of 16S rRNA. This chain is Ribosomal RNA small subunit methyltransferase J, found in Laribacter hongkongensis (strain HLHK9).